Reading from the N-terminus, the 243-residue chain is uncharacterized protein (243 aa).

The signal sequence occupies residues 1-19 (MKSLPLLGILAFAANRLSA). Asn-112 and Asn-206 each carry an N-linked (GlcNAc...) asparagine glycan.

This is an uncharacterized protein from Encephalitozoon cuniculi (strain GB-M1) (Microsporidian parasite).